The chain runs to 335 residues: Cytoplasmic envelopment protein 2 (335 aa).

It belongs to the herpesviridae cytoplasmic envelopment protein 2 family. Interacts with cytoplasmic envelopment protein 3 and with the capsid.

Its subcellular location is the virion tegument. It is found in the host cytoplasm. The protein resides in the host nucleus. Plays a critical role in cytoplasmic virus egress. Participates in the final step of tegumentation and envelope acquisition within the host cytoplasm by directly interacting with the capsid. Upon virion binding to target cell, a signaling cascade is triggered to disrupt the interaction with the capsid, thereby preparing capsid uncoating. This Human herpesvirus 6A (strain Uganda-1102) (HHV-6 variant A) protein is Cytoplasmic envelopment protein 2 (U65).